The chain runs to 2472 residues: MSGSTQPVAQTWRAAEPRYPPHGISYPVQIARSHTDVGLLEYQHHPRDYTSHLSPGSIIQPQRRRPSLLSEFQPGSERSQELHLRPESRTFLPELGKPDIEFTESKRPRLELLPDTLLRPSPLLATGQPSGSEDLTKDRSLAGKLEPVSPPSPPHADPELELAPSRLSKEELIQNMDRVDREITMVEQQISKLKKKQQQLEEEAAKPPEPEKPVSPPPIESKHRSLVQIIYDENRKKAEAAHRILEGLGPQVELPLYNQPSDTRQYHENIKINQAMRKKLILYFKRRNHARKQWEQRFCQRYDQLMEAWEKKVERIENNPRRRAKESKVREYYEKQFPEIRKQRELQERMQSRVGQRGSGLSMSAARSEHEVSEIIDGLSEQENLEKQMRQLAVIPPMLYDADQQRIKFINMNGLMDDPMKVYKDRQVTNMWSEQERDTFREKFMQHPKNFGLIASFLERKTVAECVLYYYLTKKNENYKSLVRRSYRRRGKSQQQQQQQQQQQQQQMARSSQEEKEEKEKEKEADKEEEKQDAENEKEELSKEKTDDTSGEDNDEKEAVASKGRKTANSQGRRKGRITRSMANEANHEETATPQQSSELASMEMNESSRWTEEEMETAKKGLLEHGRNWSAIARMVGSKTVSQCKNFYFNYKKRQNLDEILQQHKLKMEKERNARRKKKKTPAAASEETAFPPAAEDEEMEASGASANEEELAEEAEASQASGNEVPRVGECSGPAAVNNSSDTESVPSPRSEATKDTGPKPTGTEALPAATQPPVPPPEEPAVAPAEPSPVPDASGPPSPEPSPSPAAPPATVDKDEQEAPAAPAPQTEDAKEQKSEAEEIDVGKPEEPEASEEPPESVKSDHKEETEEEPEDKAKGTEAIETVSEAPLKVEEAGSKAAVTKGSSSGATQDSDSSATCSADEVDEPEGGDKGRLLSPRPSLLTPAGDPRASTSPQKPLDLKQLKQRAAAIPPIVTKVHEPPREDTVPPKPVPPVPPPTQHLQPEGDVSQQSGGSPRGKSRSPVPPAEKEAEKPAFFPAFPTEGPKLPTEPPRWSSGLPFPIPPREVIKTSPHAADPSAFSYTPPGHPLPLGLHDSARPVLPRPPISNPPPLISSAKHPGVLERQLGAISQQGMSVQLRVPHSEHAKAPMGPLTMGLPLAVDPKKLGTALGSATSGSITKGLPSTRAADGPSYRGSITHGTPADVLYKGTISRIVGEDSPSRLDRAREDTLPKGHVIYEGKKGHVLSYEGGMSVSQCSKEDGRSSSGPPHETAAPKRTYDMMEGRVGRTVTSASIEGLMGRAIPEQHSPHLKEQHHIRGSITQGIPRSYVEAQEDYLRREAKLLKREGTPPPPPPPRDLTETYKPRPLDPLGPLKLKPTHEGVVATVKEAGRSIHEIPREELRRTPELPLAPRPLKEGSITQGTPLKYDSGAPSTGTKKHDVRSIIGSPGRPFPALHPLDIMADARALERACYEESLKSRSGTSSGAGGSITRGAPVVVPELGKPRQSPLTYEDHGAPFTSHLPRGSPVTTREPTPRLQEGSLLSSKASQDRKLTSTPREIAKSPHSTVPEHHPHPISPYEHLLRGVTGVDLYRGHIPLAFDPTSIPRGIPLEAAAAAYYLPRHLAPSPTYPHLYPPYLIRGYPDTAALENRQTIINDYITSQQMHHNAASAMAQRADMLRGLSPRESSLALNYAAGPRGIIDLSQVPHLPVLVPPTPGTPATAIDRLAYLPTAPPPFSSRHSSSPLSPGGPTHLAKPTATSSSERERERERERDKSILTSTTTVEHAPIWRPGTEQSSGAGGSSRPASHTHQHSPISPRTQDALQQRPSVLHNTSMKGVVTSVEPGTPTVLRWARSTSTSSPVRPAATFPPATHCPLGGTLEGVYPTLMEPVLLPKETSRVARPERPRVDAGHAFLTKPPAREPASSPSKSSEPRSLAPPSSSHTAIARTPAKNLAPHHASPDPPAPTSASDLHREKTQSKPFSIQELELRSLGYHSGAGYSPDGVEPISPVSSPSLTHDKGLSKPLEELEKSHLEGELRHKQPGPMKLSAEAAHLPHLRPLPESQPSSSPLLQTAPGIKGHQRVVTLAQHISEVITQDYTRHHPQQLSGPLPAPLYSFPGASCPVLDLRRPPSDLYLPPPDHGTPARGSPHSEGGKRSPEPSKTSVLGSSEDAIEPVSPPEGMTEPGHARSTAYPLLYRDGEQGEPRMGSKSPGNTSQPPAFFSKLTESNSAMVKSKKQEINKKLNTHNRNEPEYNIGQPGTEIFNMPAITGAGLMTCRSQAVQEHASTNMGLEAIIRKALMGKYDQWEEPPPLGANAFNPLNASASLPAAAMPITTADGRSDHALTSPGGGGKAKVSGRPSSRKAKSPAPGLASGDRPPSVSSVHSEGDCNRRTPLTNRVWEDRPSSAGSTPFPYNPLIMRLQAGVMASPPPPGLAAGSGPLAGPHHAWDEEPKPLLCSQYETLSDSE.

Disordered regions lie at residues 1–20, 47–168, and 190–220; these read MSGSTQPVAQTWRAAEPRYP, RDYT…SRLS, and ISKLKKKQQQLEEEAAKPPEPEKPVSPPPIE. Arginine 18 carries the post-translational modification Asymmetric dimethylarginine. Over residues 51–60 the composition is skewed to polar residues; it reads SHLSPGSIIQ. Phosphoserine is present on residues serine 54 and serine 67. 2 stretches are compositionally biased toward basic and acidic residues: residues 78–88 and 96–112; these read RSQELHLRPES and GKPDIEFTESKRPRLEL. Phosphoserine occurs at positions 149 and 152. The stretch at 165–207 forms a coiled coil; that stretch reads SRLSKEELIQNMDRVDREITMVEQQISKLKKKQQQLEEEAAKP. The span at 203–212 shows a compositional bias: basic and acidic residues; the sequence is EAAKPPEPEK. The residue at position 215 (serine 215) is a Phosphoserine. An interaction with SIN3A/B region spans residues 254–312; it reads LPLYNQPSDTRQYHENIKINQAMRKKLILYFKRRNHARKQWEQRFCQRYDQLMEAWEKK. The interval 389–480 is deacetylase activation domain (DAD); that stretch reads MRQLAVIPPM…YLTKKNENYK (92 aa). The 52-residue stretch at 427-478 folds into the SANT 1 domain; it reads QVTNMWSEQERDTFREKFMQHPKNFGLIASFLERKTVAECVLYYYLTKKNEN. 1D-myo-inositol 1,4,5,6-tetrakisphosphate-binding residues include lysine 449, tyrosine 470, and tyrosine 471. 3 disordered regions span residues 487-618, 665-1107, and 1173-1197; these read YRRR…EMET, HKLK…RPPI, and SATSGSITKGLPSTRAADGPSYRGS. The stretch at 492 to 560 forms a coiled coil; sequence KSQQQQQQQQ…GEDNDEKEAV (69 aa). Serine 493 carries the post-translational modification Phosphoserine. The segment covering 494-507 has biased composition (low complexity); the sequence is QQQQQQQQQQQQQQ. A compositionally biased stretch (basic and acidic residues) spans 512 to 548; sequence SQEEKEEKEKEKEADKEEEKQDAENEKEELSKEKTDD. Position 549 is a phosphothreonine (threonine 549). At serine 550 the chain carries Phosphoserine. Positions 592-609 are enriched in polar residues; it reads ATPQQSSELASMEMNESS. The SANT 2 domain maps to 606-657; the sequence is NESSRWTEEEMETAKKGLLEHGRNWSAIARMVGSKTVSQCKNFYFNYKKRQN. Residues 658 to 682 adopt a coiled-coil conformation; that stretch reads LDEILQQHKLKMEKERNARRKKKKT. Over residues 709-718 the composition is skewed to acidic residues; sequence NEEELAEEAE. Polar residues predominate over residues 739 to 750; the sequence is VNNSSDTESVPS. Serine 747 and serine 750 each carry phosphoserine. Pro residues-rich tracts occupy residues 773-782 and 789-811; these read TQPPVPPPEE and EPSPVPDASGPPSPEPSPSPAAP. 2 stretches are compositionally biased toward basic and acidic residues: residues 831–850 and 859–868; these read EDAKEQKSEAEEIDVGKPEE and ESVKSDHKEE. Lysine 878 carries the post-translational modification N6-acetyllysine. Positions 905 to 919 are enriched in low complexity; it reads GSSSGATQDSDSSAT. Position 938 is a phosphoserine (serine 938). Residue threonine 945 is modified to Phosphothreonine. Serine 955 is modified (phosphoserine). The residue at position 958 (lysine 958) is an N6-acetyllysine. The segment covering 978-988 has biased composition (basic and acidic residues); that stretch reads KVHEPPREDTV. Residues 989 to 1000 show a composition bias toward pro residues; it reads PPKPVPPVPPPT. Low complexity predominate over residues 1090–1101; that stretch reads LPLGLHDSARPV. Residues lysine 1181 and lysine 1209 each carry the N6-acetyllysine modification. At serine 1220 the chain carries Phosphoserine. Disordered stretches follow at residues 1254-1277, 1345-1378, and 1410-1443; these read SVSQCSKEDGRSSSGPPHETAAPK, LKREGTPPPPPPPRDLTETYKPRPLDPLGPLKLK, and PLAPRPLKEGSITQGTPLKYDSGAPSTGTKKHDV. Threonine 1350 is subject to Phosphothreonine. Positions 1359–1368 are enriched in basic and acidic residues; sequence DLTETYKPRP. Serine 1449, serine 1509, and serine 1565 each carry phosphoserine. The segment at 1479 to 1578 is disordered; sequence KSRSGTSSGA…TVPEHHPHPI (100 aa). Residue arginine 1624 is modified to Asymmetric dimethylarginine. Positions 1734–1826 are disordered; that stretch reads TAPPPFSSRH…PISPRTQDAL (93 aa). The segment covering 1740–1753 has biased composition (low complexity); that stretch reads SSRHSSSPLSPGGP. 2 positions are modified to phosphoserine: serine 1746 and serine 1749. A compositionally biased stretch (basic and acidic residues) spans 1765–1778; sequence SERERERERERDKS. The span at 1807-1826 shows a compositional bias: polar residues; the sequence is RPASHTHQHSPISPRTQDAL. Position 1819 is a phosphoserine (serine 1819). Position 1854 is an omega-N-methylarginine (arginine 1854). Disordered stretches follow at residues 1857–1878, 1898–1986, and 2001–2078; these read RSTSTSSPVRPAATFPPATHCP, KETS…KPFS, and AGYS…LQTA. A compositionally biased stretch (basic and acidic residues) spans 1899–1913; that stretch reads ETSRVARPERPRVDA. Position 1920 is an N6-acetyllysine (lysine 1920). Residues 1925–1938 are compositionally biased toward low complexity; the sequence is EPASSPSKSSEPRS. Position 1963 is a phosphoserine (serine 1963). Lysine 1983 is modified (N6-acetyllysine). A phosphoserine mark is found at serine 2004, serine 2012, serine 2015, serine 2016, and serine 2018. Phosphothreonine is present on threonine 2020. Positions 2020–2043 are enriched in basic and acidic residues; the sequence is THDKGLSKPLEELEKSHLEGELRH. The residue at position 2035 (serine 2035) is a Phosphoserine. Over residues 2064 to 2075 the composition is skewed to low complexity; sequence LPESQPSSSPLL. The tract at residues 2086–2090 is required for interaction with RARA in the absence of its ligand; the sequence is RVVTL. Positions 2094–2098 match the CORNR box of ID1 motif; it reads ISEVI. Positions 2132–2226 are disordered; the sequence is RRPPSDLYLP…GNTSQPPAFF (95 aa). Phosphoserine is present on residues serine 2161, serine 2181, and serine 2215. The short motif at 2296–2300 is the CORNR box of ID2 element; the sequence is LEAII. The tract at residues 2343 to 2459 is disordered; the sequence is GRSDHALTSP…HHAWDEEPKP (117 aa). At serine 2371 the chain carries Phosphoserine. A compositionally biased stretch (low complexity) spans 2439–2450; that stretch reads LAAGSGPLAGPH.

The protein belongs to the N-CoR nuclear receptor corepressors family. In terms of assembly, forms a large corepressor complex that contains SIN3A/B and histone deacetylases HDAC1 and HDAC2. This complex associates with the thyroid (TR) and the retinoid acid receptors (RAR) in the absence of ligand, and may stabilize their interaction with TFIIB. Interacts directly with RARA in the absence of ligand; the interaction represses RARA activity. Interacts (isoform SMRT) with HDAC10. Interacts with MINT. Component of the N-Cor repressor complex, at least composed of NCOR1, NCOR2, HDAC3, TBL1X, TBL1R, CORO2A and GPS2. Interacts with CBFA2T3 and ATXN1L. Interacts with RARB; the interaction is weak and does not repress RARB transactivational activity. Interacts (via 1D-myo-inositol 1,4,5,6-tetrakisphosphate) with HDAC3; promoting the histone deacetylase activity of HDAC3. Interacts with HDAC7 and C1D. Interacts with NR4A2; this interaction increases in the absence of PITX3. Interacts with BCL6 (via the BTB domain), required for BCL6 transcriptional repressor activity on a subset of target genes. Forms ternary complexes with BCOR and BCL6 on target gene promoters but, on enhancer elements, interacts with BCL6 and HDAC3 to repress proximal gene expression. May interact with DEAF1. Interacts with RXRA. Interacts with MECP2. Interacts with ZBTB7A. Interacts with AR. Interacts with TBL1Y. Interacts with SANBR (via the BTB domain). As to expression, ubiquitous. Also widely expressed in early embryos.

The protein localises to the nucleus. Functionally, transcriptional corepressor that mediates the transcriptional repression activity of some nuclear receptors by promoting chromatin condensation, thus preventing access of the basal transcription. Acts by recruiting chromatin modifiers, such as histone deacetylases HDAC1, HDAC2 and HDAC3. Required to activate the histone deacetylase activity of HDAC3. Involved in the regulation BCL6-dependent of the germinal center (GC) reactions, mainly through the control of the GC B-cells proliferation and survival. Recruited by ZBTB7A to the androgen response elements/ARE on target genes, negatively regulates androgen receptor signaling and androgen-induced cell proliferation. In Mus musculus (Mouse), this protein is Nuclear receptor corepressor 2 (Ncor2).